The chain runs to 331 residues: Tyrosine recombinase XerD (331 aa).

The Core-binding (CB) domain occupies 8 to 93; that stretch reads GRDGARLESF…SMRQFYRFLY (86 aa). The region spanning 114 to 318 is the Tyr recombinase domain; that stretch reads ALPKTMSVAD…LEERLQELVQ (205 aa). Residues Arg161 and Lys185 contribute to the active site. Residues 214–228 are compositionally biased toward basic and acidic residues; that stretch reads QEKSKAAASQKKTDT. The disordered stretch occupies residues 214–239; the sequence is QEKSKAAASQKKTDTAESPWLFPSNS. Active-site residues include His270, Arg273, and His296. The O-(3'-phospho-DNA)-tyrosine intermediate role is filled by Tyr305.

This sequence belongs to the 'phage' integrase family. XerD subfamily. As to quaternary structure, forms a cyclic heterotetrameric complex composed of two molecules of XerC and two molecules of XerD.

It localises to the cytoplasm. Site-specific tyrosine recombinase, which acts by catalyzing the cutting and rejoining of the recombining DNA molecules. The XerC-XerD complex is essential to convert dimers of the bacterial chromosome into monomers to permit their segregation at cell division. It also contributes to the segregational stability of plasmids. The polypeptide is Tyrosine recombinase XerD (Agrobacterium fabrum (strain C58 / ATCC 33970) (Agrobacterium tumefaciens (strain C58))).